Consider the following 310-residue polypeptide: Ribosomal RNA small subunit methyltransferase H (310 aa).

S-adenosyl-L-methionine is bound by residues 32 to 34, Asp-52, Phe-79, Asp-100, and Gln-107; that span reads AGH.

This sequence belongs to the methyltransferase superfamily. RsmH family.

It localises to the cytoplasm. The enzyme catalyses cytidine(1402) in 16S rRNA + S-adenosyl-L-methionine = N(4)-methylcytidine(1402) in 16S rRNA + S-adenosyl-L-homocysteine + H(+). Its function is as follows. Specifically methylates the N4 position of cytidine in position 1402 (C1402) of 16S rRNA. This is Ribosomal RNA small subunit methyltransferase H from Halalkalibacterium halodurans (strain ATCC BAA-125 / DSM 18197 / FERM 7344 / JCM 9153 / C-125) (Bacillus halodurans).